Reading from the N-terminus, the 293-residue chain is NAD kinase (293 aa).

D72 functions as the Proton acceptor in the catalytic mechanism. NAD(+) is bound by residues 72–73 (DG), 146–147 (ND), R157, R174, D176, 187–192 (TAYALS), and Q247.

Belongs to the NAD kinase family. A divalent metal cation is required as a cofactor.

The protein localises to the cytoplasm. It catalyses the reaction NAD(+) + ATP = ADP + NADP(+) + H(+). Involved in the regulation of the intracellular balance of NAD and NADP, and is a key enzyme in the biosynthesis of NADP. Catalyzes specifically the phosphorylation on 2'-hydroxyl of the adenosine moiety of NAD to yield NADP. This Chromohalobacter salexigens (strain ATCC BAA-138 / DSM 3043 / CIP 106854 / NCIMB 13768 / 1H11) protein is NAD kinase.